We begin with the raw amino-acid sequence, 455 residues long: Phosphoglucosamine/phosphogalactosamine mutase (455 aa).

The active-site Phosphoserine intermediate is the Ser97. Mg(2+) contacts are provided by Ser97, Asp241, Asp243, and Asp245. A Phosphoserine modification is found at Ser97.

It belongs to the phosphohexose mutase family. Mg(2+) is required as a cofactor. In terms of processing, activated by phosphorylation.

It catalyses the reaction alpha-D-glucosamine 1-phosphate = D-glucosamine 6-phosphate. It carries out the reaction D-galactosamine 6-phosphate = alpha-D-galactosamine 1-phosphate. Its function is as follows. Involved in the synthesis of UDP-N-acetylglucosamine (UDP-GlcNAc) and UDP-N-acetylgalactosamine (UDP-GalNAc). Catalyzes the conversion of glucosamine-6-phosphate to glucosamine-1-phosphate and of galactosamine-6-phosphate to galactosamine-1-phosphate. This Sulfurisphaera tokodaii (strain DSM 16993 / JCM 10545 / NBRC 100140 / 7) (Sulfolobus tokodaii) protein is Phosphoglucosamine/phosphogalactosamine mutase.